A 150-amino-acid chain; its full sequence is Ribonuclease H (150 aa).

Positions 2 to 143 constitute an RNase H type-1 domain; it reads PAPILDIFVD…ADELANRAIE (142 aa). The Mg(2+) site is built by Asp-11, Glu-49, Asp-71, and Asp-135.

This sequence belongs to the RNase H family. As to quaternary structure, monomer. It depends on Mg(2+) as a cofactor.

The protein localises to the cytoplasm. The enzyme catalyses Endonucleolytic cleavage to 5'-phosphomonoester.. Functionally, endonuclease that specifically degrades the RNA of RNA-DNA hybrids. This is Ribonuclease H from Dichelobacter nodosus (strain VCS1703A).